Consider the following 283-residue polypeptide: F-box only protein 27 (283 aa).

The segment at 1-23 (MGASVSRGRAARVPAPEPEPEEA) is disordered. Residues 23–70 (ALDLSQLPPELLLVVLSHVPPRTLLGRCRQVCRGWRALVDGQALWLLI) enclose the F-box domain. An FBA domain is found at 104 to 280 (FCARRPIGRN…VTNSSVIVRV (177 aa)).

Part of a SCF (SKP1-cullin-F-box) protein ligase complex. Interacts with SKP1 and CUL1. Predominantly expressed in brain, heart and kidney. Expressed at lower levels in liver and lung.

Functionally, substrate-recognition component of the SCF (SKP1-CUL1-F-box protein)-type E3 ubiquitin ligase complex. Able to recognize and bind denatured glycoproteins, which are modified with complex-type oligosaccharides. The polypeptide is F-box only protein 27 (FBXO27) (Homo sapiens (Human)).